A 267-amino-acid chain; its full sequence is Acetyl-coenzyme A carboxylase carboxyl transferase subunit beta, chloroplastic (267 aa).

Residues 12–267 form the CoA carboxyltransferase N-terminal domain; the sequence is LWKKCDSCNI…TIHMILDLHN (256 aa). Zn(2+) contacts are provided by C16, C19, C35, and C38. A C4-type zinc finger spans residues 16 to 38; that stretch reads CDSCNILISKFDFYKHDKVCPEC.

It belongs to the AccD/PCCB family. Acetyl-CoA carboxylase is a heterohexamer composed of biotin carboxyl carrier protein, biotin carboxylase and 2 subunits each of ACCase subunit alpha and ACCase plastid-coded subunit beta (accD). Requires Zn(2+) as cofactor.

It is found in the plastid. Its subcellular location is the chloroplast stroma. The enzyme catalyses N(6)-carboxybiotinyl-L-lysyl-[protein] + acetyl-CoA = N(6)-biotinyl-L-lysyl-[protein] + malonyl-CoA. It participates in lipid metabolism; malonyl-CoA biosynthesis; malonyl-CoA from acetyl-CoA: step 1/1. Its function is as follows. Component of the acetyl coenzyme A carboxylase (ACC) complex. Biotin carboxylase (BC) catalyzes the carboxylation of biotin on its carrier protein (BCCP) and then the CO(2) group is transferred by the transcarboxylase to acetyl-CoA to form malonyl-CoA. The chain is Acetyl-coenzyme A carboxylase carboxyl transferase subunit beta, chloroplastic from Cyanidium caldarium (Red alga).